We begin with the raw amino-acid sequence, 437 residues long: MKVYIETMGCAMNSRDSEHLLSELSKLDYKETNDPKIADLILINTCSVREKPERKLFSEIGQFAKIKKPNAKIGVCGCTASHMGADILKKAPSVSFVLGARNVSKISQVIHKEKAVEVAIDYDESAYAFEFFEKKAQIRSLLNISIGCDKKCAYCIVPHTRGKEISIPMDLILKEAEKLANNGTKELMLLGQNVNNYGVRFSSEHAKVDFSDLLDKLSEIQGIERIRFTSPHPLHMNDGFLERFAKNPKVCKSIHMPLQSGSSAVLKMMRRGYSKEWFLNRVERLKALVPEVGISTDIIVGFPNESDKDFEDTMEVLEKVRFDTLYSFIYSPRPFTEAGAWKERVPLEVSYSRLERLQNRHKEILEEKAKLEVGKTHVVLVENRREMDNQIVGFEGRSDTGKFIEVTCKEKRNPGELVKVEIISHSKGRLIAAIKGN.

Residues Met-1–Ala-115 enclose the MTTase N-terminal domain. [4Fe-4S] cluster contacts are provided by Cys-10, Cys-46, Cys-78, Cys-148, Cys-152, and Cys-155. Positions Lys-134–Glu-367 constitute a Radical SAM core domain. A TRAM domain is found at Lys-370–Gly-436.

Belongs to the methylthiotransferase family. MiaB subfamily. In terms of assembly, monomer. It depends on [4Fe-4S] cluster as a cofactor.

The protein resides in the cytoplasm. The catalysed reaction is N(6)-dimethylallyladenosine(37) in tRNA + (sulfur carrier)-SH + AH2 + 2 S-adenosyl-L-methionine = 2-methylsulfanyl-N(6)-dimethylallyladenosine(37) in tRNA + (sulfur carrier)-H + 5'-deoxyadenosine + L-methionine + A + S-adenosyl-L-homocysteine + 2 H(+). Its function is as follows. Catalyzes the methylthiolation of N6-(dimethylallyl)adenosine (i(6)A), leading to the formation of 2-methylthio-N6-(dimethylallyl)adenosine (ms(2)i(6)A) at position 37 in tRNAs that read codons beginning with uridine. The sequence is that of tRNA-2-methylthio-N(6)-dimethylallyladenosine synthase from Helicobacter pylori (strain HPAG1).